We begin with the raw amino-acid sequence, 1094 residues long: Transport and Golgi organization protein 6 homolog (1094 aa).

The helical transmembrane segment at 468–488 (LTVLMDSLLPVLGVLFLLYCF) threads the bilayer. The residue at position 556 (Ser-556) is a Phosphoserine. Basic and acidic residues predominate over residues 777-795 (EEQQQTSHERPTDVAHSHL). Residues 777–834 (EEQQQTSHERPTDVAHSHLEQQQSHETAPQTGLQSNAPIIPQGVNEPSTTTSQKSGSV) form a disordered region. Composition is skewed to polar residues over residues 796 to 813 (EQQQSHETAPQTGLQSNA) and 821 to 834 (NEPSTTTSQKSGSV). HEAT repeat units lie at residues 873 to 909 (LEMQEKLLKIFLENLEHEDTFVYLSAIQGVALLSDVY) and 952 to 988 (SKYREPLIHTFLRGVRDPDGAHRASSLANLGELCQRL).

It belongs to the Tango6 family.

The protein localises to the membrane. The chain is Transport and Golgi organization protein 6 homolog (TANGO6) from Homo sapiens (Human).